Reading from the N-terminus, the 200-residue chain is Holliday junction branch migration complex subunit RuvA (200 aa).

A domain I region spans residues 1–63 (MYAYIKGTLS…EDAQLLYGFI (63 aa)). Positions 64-142 (NEEEKEMFLS…ITEENSDDLL (79 aa)) are domain II. Residues 143 to 149 (QTQVNGN) form a flexible linker region. The domain III stretch occupies residues 150–200 (EQNQIISEALLALQALGYSKRELTKVEKSLNKHNVNSVDEAVKIGLQTLVS).

Belongs to the RuvA family. In terms of assembly, homotetramer. Forms an RuvA(8)-RuvB(12)-Holliday junction (HJ) complex. HJ DNA is sandwiched between 2 RuvA tetramers; dsDNA enters through RuvA and exits via RuvB. An RuvB hexamer assembles on each DNA strand where it exits the tetramer. Each RuvB hexamer is contacted by two RuvA subunits (via domain III) on 2 adjacent RuvB subunits; this complex drives branch migration. In the full resolvosome a probable DNA-RuvA(4)-RuvB(12)-RuvC(2) complex forms which resolves the HJ.

The protein resides in the cytoplasm. Its function is as follows. The RuvA-RuvB-RuvC complex processes Holliday junction (HJ) DNA during genetic recombination and DNA repair, while the RuvA-RuvB complex plays an important role in the rescue of blocked DNA replication forks via replication fork reversal (RFR). RuvA specifically binds to HJ cruciform DNA, conferring on it an open structure. The RuvB hexamer acts as an ATP-dependent pump, pulling dsDNA into and through the RuvAB complex. HJ branch migration allows RuvC to scan DNA until it finds its consensus sequence, where it cleaves and resolves the cruciform DNA. This Staphylococcus epidermidis (strain ATCC 35984 / DSM 28319 / BCRC 17069 / CCUG 31568 / BM 3577 / RP62A) protein is Holliday junction branch migration complex subunit RuvA.